The chain runs to 83 residues: Late seed maturation protein P8B6 (83 aa).

2 stretches are compositionally biased toward basic and acidic residues: residues 1 to 18 (MASQ…KKGE) and 37 to 51 (AEGR…KEQL). The interval 1 to 83 (MASQQEKKQL…DAEDEPSTRT (83 aa)) is disordered. A compositionally biased stretch (acidic residues) spans 73 to 83 (EDAEDEPSTRT).

Belongs to the small hydrophilic plant seed protein family.

Its subcellular location is the cytoplasm. Its function is as follows. This protein may play a role in equipping the seed for survival, maintaining a minimal level of hydration in the dry organism and preventing the denaturation of cytoplasmic components, or may play a role during imbibition by controlling water uptake. The polypeptide is Late seed maturation protein P8B6 (Raphanus sativus (Radish)).